Consider the following 465-residue polypeptide: Hepatocyte nuclear factor 6 (465 aa).

Disordered regions lie at residues 17–55 (SHEPVPAPADLLGGSPHARSSVAHRGSHLPPAHPRSMGM), 120–141 (DKFPHHHHHHHHHHHPHHHQRL), 264–290 (LLGTAREPNPSVTGAQVSNGSNSGQME), and 442–465 (DKWQDEGSSNSGNSSSSSSTCTKA). Over residues 123–140 (PHHHHHHHHHHHPHHHQR) the composition is skewed to basic residues. Over residues 273–288 (PSVTGAQVSNGSNSGQ) the composition is skewed to polar residues. The CUT DNA-binding region spans 283–369 (GSNSGQMEEI…QRMSALRLAA (87 aa)). Positions 385 to 444 (PKKPRLVFTDVQRRTLHAIFKENKRPSKELQITISQQLGLELSTVSNFFMNARRRSLDKW) form a DNA-binding region, homeobox. The segment covering 448–465 (GSSNSGNSSSSSSTCTKA) has biased composition (low complexity).

Belongs to the CUT homeobox family. In terms of assembly, binds DNA as a monomer. In terms of tissue distribution, highly expressed in liver; lower expression in testis and skin.

Its subcellular location is the nucleus. In terms of biological role, transcriptional activator. Binds the consensus sequence 5'-DHWATTGAYTWWD-3' on a variety of gene promoters such as those of HNF3B and TTR. Important for liver genes transcription. This Homo sapiens (Human) protein is Hepatocyte nuclear factor 6 (ONECUT1).